The chain runs to 196 residues: Imidazoleglycerol-phosphate dehydratase (196 aa).

It belongs to the imidazoleglycerol-phosphate dehydratase family.

The protein resides in the cytoplasm. The catalysed reaction is D-erythro-1-(imidazol-4-yl)glycerol 3-phosphate = 3-(imidazol-4-yl)-2-oxopropyl phosphate + H2O. Its pathway is amino-acid biosynthesis; L-histidine biosynthesis; L-histidine from 5-phospho-alpha-D-ribose 1-diphosphate: step 6/9. This is Imidazoleglycerol-phosphate dehydratase from Dehalococcoides mccartyi (strain ATCC BAA-2266 / KCTC 15142 / 195) (Dehalococcoides ethenogenes (strain 195)).